Reading from the N-terminus, the 81-residue chain is WAP four-disulfide core domain protein 13 (81 aa).

The signal sequence occupies residues 1 to 22; that stretch reads MRPVSPLQLLLVLSLAPQPVLG. Residues 31–74 form the WAP domain; it reads YILEPPPCRSEPGACNMFCTQQEECPEPLQCCSAYCGIVCTSNQ. Intrachain disulfides connect C38–C62, C45–C66, C49–C61, and C55–C70.

Its subcellular location is the secreted. In terms of biological role, putative acid-stable proteinase inhibitor. The protein is WAP four-disulfide core domain protein 13 (Wfdc13) of Mus musculus (Mouse).